Consider the following 373-residue polypeptide: Dual-specificity RNA methyltransferase RlmN (373 aa).

The active-site Proton acceptor is the Glu94. Positions 100-339 (EDDRATLCVS…VIVRKTRGDD (240 aa)) constitute a Radical SAM core domain. Cysteines 107 and 344 form a disulfide. Cys114, Cys118, and Cys121 together coordinate [4Fe-4S] cluster. S-adenosyl-L-methionine contacts are provided by residues 168–169 (GE), Ser200, 222–224 (SIH), and Asn301. The active-site S-methylcysteine intermediate is the Cys344.

Belongs to the radical SAM superfamily. RlmN family. Requires [4Fe-4S] cluster as cofactor.

The protein localises to the cytoplasm. It carries out the reaction adenosine(2503) in 23S rRNA + 2 reduced [2Fe-2S]-[ferredoxin] + 2 S-adenosyl-L-methionine = 2-methyladenosine(2503) in 23S rRNA + 5'-deoxyadenosine + L-methionine + 2 oxidized [2Fe-2S]-[ferredoxin] + S-adenosyl-L-homocysteine. The enzyme catalyses adenosine(37) in tRNA + 2 reduced [2Fe-2S]-[ferredoxin] + 2 S-adenosyl-L-methionine = 2-methyladenosine(37) in tRNA + 5'-deoxyadenosine + L-methionine + 2 oxidized [2Fe-2S]-[ferredoxin] + S-adenosyl-L-homocysteine. Its function is as follows. Specifically methylates position 2 of adenine 2503 in 23S rRNA and position 2 of adenine 37 in tRNAs. m2A2503 modification seems to play a crucial role in the proofreading step occurring at the peptidyl transferase center and thus would serve to optimize ribosomal fidelity. The protein is Dual-specificity RNA methyltransferase RlmN of Shewanella sp. (strain MR-4).